A 186-amino-acid polypeptide reads, in one-letter code: MKRKKQDRQRHLKETIDANPFITDEALADRFGVSIQTIRLDRMELSIPELRERIKDVAQKQLDEVKALPMEEVFGEIVDLQLDERAISILDVKKEHVFSRTGIARGHYLFAQANSLAVAIIDDDLALTAKATIRFTRQVKAGERVVAKAEVQKVERDRTLVVVNSFVEQELVFSGDFLMYRSAQEQ.

It belongs to the FapR family.

In terms of biological role, transcriptional factor involved in regulation of membrane lipid biosynthesis by repressing genes involved in fatty acid and phospholipid metabolism. The protein is Transcription factor FapR of Halalkalibacterium halodurans (strain ATCC BAA-125 / DSM 18197 / FERM 7344 / JCM 9153 / C-125) (Bacillus halodurans).